The primary structure comprises 251 residues: Lactose phosphotransferase system repressor (251 aa).

An HTH deoR-type domain is found at 3 to 58 (KHERLDEIAKLVNKKGTIRTNEIVEGLNVSDMTVRRDLIELENKGILTKIHGGARS). The H-T-H motif DNA-binding region spans 20–39 (IRTNEIVEGLNVSDMTVRRD).

Repressor of the lactose catabolism operon. Galactose-6-phosphate is the inducer. The polypeptide is Lactose phosphotransferase system repressor (lacR) (Staphylococcus aureus (strain MRSA252)).